A 331-amino-acid chain; its full sequence is Cytosolic Fe-S cluster assembly factor NBP35 (331 aa).

Over residues 1–10 (MSPSQTQIEK) the composition is skewed to polar residues. The segment at 1–32 (MSPSQTQIEKSQLAAPEPEHCPGPESELAGQG) is disordered. [4Fe-4S] cluster is bound by residues C21, C35, C38, and C44. An ATP-binding site is contributed by 75–82 (GKGGVGKS). C249 and C252 together coordinate [4Fe-4S] cluster.

This sequence belongs to the Mrp/NBP35 ATP-binding proteins family. NUBP1/NBP35 subfamily. As to quaternary structure, heterotetramer of 2 NBP35 and 2 CFD1 chains. The cofactor is [4Fe-4S] cluster.

The protein localises to the cytoplasm. It is found in the nucleus. In terms of biological role, component of the cytosolic iron-sulfur (Fe/S) protein assembly (CIA) machinery. Required for maturation of extramitochondrial Fe-S proteins. The NBP35-CFD1 heterotetramer forms a Fe-S scaffold complex, mediating the de novo assembly of an Fe-S cluster and its transfer to target apoproteins. Required for biogenesis and export of both ribosomal subunits, which may reflect a role in assembly of the Fe/S clusters in RLI1, a protein which performs rRNA processing and ribosome export. This chain is Cytosolic Fe-S cluster assembly factor NBP35, found in Candida albicans (strain SC5314 / ATCC MYA-2876) (Yeast).